We begin with the raw amino-acid sequence, 438 residues long: Glycerol-3-phosphate acyltransferase 3 (438 aa).

A helical membrane pass occupies residues 14-34; sequence WLTLVGGLILLPSAFGLSLGI. Phosphoserine is present on residues serine 68 and serine 77. A run of 2 helical transmembrane segments spans residues 137-157 and 161-181; these read ISPRLTMVWVLGVLVRYCFLL and VTLAFIGISLLIIGTTLVGQL. The short motif at 229–234 is the HXXXXD motif element; sequence HTSPID.

The protein belongs to the 1-acyl-sn-glycerol-3-phosphate acyltransferase family. In terms of tissue distribution, most abundant in epididymal fat, followed by small intestine, brown adipose tissue, kidney, heart and colon.

It is found in the endoplasmic reticulum membrane. The catalysed reaction is sn-glycerol 3-phosphate + an acyl-CoA = a 1-acyl-sn-glycero-3-phosphate + CoA. The enzyme catalyses a 1-acyl-sn-glycero-3-phosphate + an acyl-CoA = a 1,2-diacyl-sn-glycero-3-phosphate + CoA. It carries out the reaction dodecanoyl-CoA + sn-glycerol 3-phosphate = 1-dodecanoyl-sn-glycerol 3-phosphate + CoA. It catalyses the reaction sn-glycerol 3-phosphate + hexadecanoyl-CoA = 1-hexadecanoyl-sn-glycero-3-phosphate + CoA. The catalysed reaction is sn-glycerol 3-phosphate + (9Z)-octadecenoyl-CoA = 1-(9Z-octadecenoyl)-sn-glycero-3-phosphate + CoA. The enzyme catalyses (9Z,12Z)-octadecadienoyl-CoA + sn-glycerol 3-phosphate = 1-(9Z,12Z)-octadecadienoyl-sn-glycero-3-phosphate + CoA. It carries out the reaction 1-tetradecanoyl-sn-glycerol 3-phosphate + (9Z)-octadecenoyl-CoA = 1-tetradecanoyl-2-(9Z)-octadecenoyl-sn-glycero-3-phosphate + CoA. It catalyses the reaction 1-hexadecanoyl-sn-glycero-3-phosphate + (9Z)-octadecenoyl-CoA = 1-hexadecanoyl-2-(9Z-octadecenoyl)-sn-glycero-3-phosphate + CoA. The catalysed reaction is 1-(9Z-octadecenoyl)-sn-glycero-3-phosphate + (9Z)-octadecenoyl-CoA = 1,2-di-(9Z-octadecenoyl)-sn-glycero-3-phosphate + CoA. The enzyme catalyses 1-(6Z,9Z,12Z-octadecatrienoyl)-sn-glycero-3-phosphate + (9Z)-octadecenoyl-CoA = (6Z,9Z,12Z)-octadecatrienoyl-2-(9Z)-octadecenoyl-sn-glycero-3-phosphate + CoA. It carries out the reaction 1-(9Z,12Z,15Z)-octadecatrienoyl-sn-glycero-3-phosphate + (9Z)-octadecenoyl-CoA = 1-(9Z,12Z,15Z)-octadecatrienoyl-2-(9Z)-octadecenoyl-sn-glycero-3-phosphate + CoA. It catalyses the reaction 1-(9Z-octadecenoyl)-sn-glycero-3-phosphate + tetradecanoyl-CoA = 1-(9Z)-octadecenoyl-2-tetradecanoyl-sn-glycero-3-phosphate + CoA. The catalysed reaction is 1-(9Z-octadecenoyl)-sn-glycero-3-phosphate + hexadecanoyl-CoA = 1-(9Z)-octadecenoyl-2-hexadecanoyl-sn-glycero-3-phosphate + CoA. The enzyme catalyses 1-(9Z-octadecenoyl)-sn-glycero-3-phosphate + octadecanoyl-CoA = 1-(9Z-octadecenoyl)-2-octadecanoyl-sn-glycero-3-phosphate + CoA. It carries out the reaction 1-(9Z-octadecenoyl)-sn-glycero-3-phosphate + (9Z,12Z)-octadecadienoyl-CoA = 1-(9Z)-octadecenoyl-2-(9Z,12Z)-octadecadienoyl-sn-glycero-3-phosphate + CoA. It catalyses the reaction 1-(5Z,8Z,11Z,14Z-eicosatetraenoyl)-sn-glycero-3-phosphate + (9Z)-octadecenoyl-CoA = 1-(5Z,8Z,11Z,14Z)-eicosatetraenoyl-2-(9Z)-octadecenoyl-sn-glycero-3-phosphate + CoA. The protein operates within glycerolipid metabolism; triacylglycerol biosynthesis. Its pathway is phospholipid metabolism; CDP-diacylglycerol biosynthesis; CDP-diacylglycerol from sn-glycerol 3-phosphate: step 1/3. In terms of biological role, converts glycerol-3-phosphate to 1-acyl-sn-glycerol-3-phosphate (lysophosphatidic acid or LPA) by incorporating an acyl moiety at the sn-1 position of the glycerol backbone. Also converts LPA into 1,2-diacyl-sn-glycerol-3-phosphate (phosphatidic acid or PA) by incorporating an acyl moiety at the sn-2 position of the glycerol backbone. Protects cells against lipotoxicity. The polypeptide is Glycerol-3-phosphate acyltransferase 3 (Mus musculus (Mouse)).